We begin with the raw amino-acid sequence, 605 residues long: Bifunctional purine biosynthesis protein ADE16 (605 aa).

An MGS-like domain is found at 1–147 (MSSEAPIALL…KNHGRVSIIS (147 aa)). IMP-binding positions include 35–38 (SGGT), 65–68 (RVKT), 102–103 (CN), and 126–127 (DI). Catalysis depends on Lys-138, which acts as the Proton donor/acceptor; for FAICAR cyclization activity. 5-amino-1-(5-phospho-beta-D-ribosyl)imidazole-4-carboxamide-binding positions include 219-220 (RY), His-279, Gly-327, Asp-350, Asn-442, and Arg-462. The active-site Proton acceptor; for AICAR formyltransferase activity is the His-279. Ile-463 lines the (6R)-10-formyltetrahydrofolate pocket. Phe-554 serves as a coordination point for 5-amino-1-(5-phospho-beta-D-ribosyl)imidazole-4-carboxamide. Asp-559 is a (6R)-10-formyltetrahydrofolate binding site. 5-amino-1-(5-phospho-beta-D-ribosyl)imidazole-4-carboxamide is bound at residue Arg-601.

The protein belongs to the PurH family. As to quaternary structure, homodimer.

The protein localises to the cytoplasm. It localises to the cytosol. It catalyses the reaction (6R)-10-formyltetrahydrofolate + 5-amino-1-(5-phospho-beta-D-ribosyl)imidazole-4-carboxamide = 5-formamido-1-(5-phospho-D-ribosyl)imidazole-4-carboxamide + (6S)-5,6,7,8-tetrahydrofolate. The enzyme catalyses IMP + H2O = 5-formamido-1-(5-phospho-D-ribosyl)imidazole-4-carboxamide. It functions in the pathway purine metabolism; IMP biosynthesis via de novo pathway; 5-formamido-1-(5-phospho-D-ribosyl)imidazole-4-carboxamide from 5-amino-1-(5-phospho-D-ribosyl)imidazole-4-carboxamide (10-formyl THF route): step 1/1. The protein operates within purine metabolism; IMP biosynthesis via de novo pathway; IMP from 5-formamido-1-(5-phospho-D-ribosyl)imidazole-4-carboxamide: step 1/1. Its function is as follows. Bifunctional enzyme that catalyzes the last two steps of purine biosynthesis. Acts as a transformylase that incorporates a formyl group to the AMP analog AICAR (5-amino-1-(5-phospho-beta-D-ribosyl)imidazole-4-carboxamide) to produce the intermediate formyl-AICAR (FAICAR). Also catalyzes the cyclization of FAICAR to IMP. The sequence is that of Bifunctional purine biosynthesis protein ADE16 from Cryptococcus neoformans var. grubii serotype A (strain H99 / ATCC 208821 / CBS 10515 / FGSC 9487) (Filobasidiella neoformans var. grubii).